The sequence spans 154 residues: Plastocyanin, chloroplastic (154 aa).

A chloroplast-targeting transit peptide spans 1 to 57; sequence MAALSSAAVTIPSMAPSAPGRRRMRSSLVVRASLGKAAGAAAVAVAASAMLAGGAMA. The 97-residue stretch at 58–154 folds into the Plastocyanin-like domain; the sequence is QEVLLGANGG…AGMVGKVTVN (97 aa). The Cu cation site is built by histidine 94, cysteine 139, histidine 142, and methionine 147.

Belongs to the plastocyanin family. Cu(2+) serves as cofactor.

The protein localises to the plastid. The protein resides in the chloroplast thylakoid membrane. Its function is as follows. Participates in electron transfer between P700 and the cytochrome b6-f complex in photosystem I. In Oryza sativa subsp. indica (Rice), this protein is Plastocyanin, chloroplastic (PETE).